The chain runs to 822 residues: uncharacterized protein (822 aa).

The segment at 1–230 (MARGKRSTQR…NAAPLNKTDA (230 aa)) is disordered. Phosphoserine is present on Ser-27. The segment covering 34–44 (SKAKKNKKKLN) has biased composition (basic residues). 3 positions are modified to phosphoserine: Ser-47, Ser-51, and Ser-55. The residue at position 57 (Tyr-57) is a Phosphotyrosine. Over residues 61-70 (PEDDEVDEEV) the composition is skewed to acidic residues. A compositionally biased stretch (basic residues) spans 73–85 (VKKKPSKKSKKAK). Over residues 92–106 (FADEQSVEEEEEEDS) the composition is skewed to acidic residues. A Phosphoserine modification is found at Ser-97. Over residues 111–121 (RKNKKSSKKAS) the composition is skewed to basic residues. 2 stretches are compositionally biased toward acidic residues: residues 129–144 (LADDMDDLSLDEEESE) and 163–172 (SEALDDGDIE). Phosphoserine occurs at positions 137 and 163. 2 consecutive ABC transporter domains span residues 276-519 (LQVE…VQLA) and 594-809 (IKFQ…AKER). Residues 308 to 315 (APNGSGKS) and 627 to 634 (GPNGAGKT) contribute to the ATP site.

Belongs to the ABC transporter superfamily.

The protein resides in the cytoplasm. This is an uncharacterized protein from Schizosaccharomyces pombe (strain 972 / ATCC 24843) (Fission yeast).